The following is a 524-amino-acid chain: Keratin, type II cytoskeletal 71 (524 aa).

Residues 1–130 (MSRQFTCKSG…DPEIQKVRAQ (130 aa)) are head. The interval 131 to 166 (EREQIKALNNKFASFIDKVRFLEQQNQVLQTKWELL) is coil 1A. Residues 131-444 (EREQIKALNN…KLLESEECRM (314 aa)) form the IF rod domain. The tract at residues 167 to 185 (QQLDLNNCKNNLEPILEGH) is linker 1. Positions 186 to 277 (ISNMRKQLET…CLFEAEMAQI (92 aa)) are coil 1B. The tract at residues 278-301 (QSHISDMSVILSMDNNRNLDLDSI) is linker 12. Residues 302 to 440 (IDEVRAQYEE…ATYRKLLESE (139 aa)) form a coil 2 region. Residues 441–524 (ECRMSGEYSS…LSTPSKKGGR (84 aa)) form a tail region. The tract at residues 493 to 524 (GGENRSRGSASDYKDTLTKGSSLSTPSKKGGR) is disordered. Residues 494–509 (GENRSRGSASDYKDTL) show a composition bias toward basic and acidic residues. The segment covering 510-524 (TKGSSLSTPSKKGGR) has biased composition (polar residues).

Belongs to the intermediate filament family. In terms of assembly, heterodimer of a type I and a type II keratin. Associates with KRT16 and/or KRT17. Specifically expressed in the inner root sheath (IRS) of the hair follicle. Present in Henle and the Huxley layers of the IRS, while expression in the cuticle is unsure (at protein level).

The protein localises to the cytoplasm. Its subcellular location is the cytoskeleton. Its function is as follows. Plays a central role in hair formation. Essential component of keratin intermediate filaments in the inner root sheath (IRS) of the hair follicle. The polypeptide is Keratin, type II cytoskeletal 71 (Krt71) (Mus musculus (Mouse)).